Consider the following 2892-residue polypeptide: E3 ubiquitin-protein ligase lubel (2892 aa).

8 disordered regions span residues 23 to 55 (DRIGPKPPPTPPNGVAGGLPKAPALPPKAKSTP), 125 to 252 (KQHM…QLEK), 395 to 423 (SQQHPGWAQHPHQALPQHQHPDQWSQFGS), 483 to 631 (PSAA…ESEG), 644 to 672 (QKLQEADQHKSSKKAEPKRKPEMKDENTQ), 685 to 737 (AHEE…PDHE), 757 to 865 (CCKT…DNSL), and 949 to 975 (DRFTTPEPNKMERRPHYRSNSQLQQES). The span at 40 to 52 (GLPKAPALPPKAK) shows a compositional bias: low complexity. Positions 189–198 (GWRGSLGGGA) are enriched in gly residues. Residues 206–215 (ATSSANQMNN) show a composition bias toward polar residues. Composition is skewed to low complexity over residues 402–412 (AQHPHQALPQH) and 483–503 (PSAASRAASRSRYAASPTPSR). Residues 516–528 (VDDELTDDEDSDQ) are compositionally biased toward acidic residues. Residues 535 to 546 (VSNRSGMTSASR) show a composition bias toward polar residues. Basic residues predominate over residues 547 to 560 (SQHHQNHIQPRQRR). Positions 606–623 (GTLTRNKTATDSARTSRI) are enriched in polar residues. Basic and acidic residues predominate over residues 647-670 (QEADQHKSSKKAEPKRKPEMKDEN). The segment covering 801-813 (KPTTKSQQPSQKS) has biased composition (polar residues). Low complexity-rich tracts occupy residues 818-837 (SKTTHTNSTSSSKASPAVNS) and 846-856 (KTPSKSTLKTS). A UBA-like 1 domain is found at 1042–1187 (MHIILKELEL…LMRIWGSPNG (146 aa)). Disordered regions lie at residues 1214 to 1252 (LQPPLAGQSPSPAQANPFDQPRTDESPVKSTYATPSPYQ), 1477 to 1520 (LPTA…KLET), 1557 to 1653 (AEVQ…KILS), 1717 to 2019 (STTI…NLSE), 2032 to 2082 (RDEI…EGNT), 2191 to 2316 (SAPP…PLRS), and 2411 to 2431 (DYETSATEEEQEEPNLAEPQK). Residues 1241–1252 (VKSTYATPSPYQ) show a composition bias toward polar residues. The span at 1510 to 1519 (EELRQQEKLE) shows a compositional bias: basic and acidic residues. A compositionally biased stretch (polar residues) spans 1560–1571 (QVQSDDQPSTSR). Residues 1576 to 1587 (RAKRSQQSRKGR) are compositionally biased toward basic residues. Polar residues predominate over residues 1595–1607 (PTNRTKLPNNIDQ). Over residues 1608 to 1627 (KVNESKTAAKETEAVKDKDL) the composition is skewed to basic and acidic residues. Composition is skewed to polar residues over residues 1630-1653 (AASNIQSDVTASDPKTSTPLKILS), 1717-1726 (STTISEQSEG), and 1764-1779 (KSPTSQEVNIQDTSHI). A compositionally biased stretch (low complexity) spans 1822-1834 (LSSSSLRSESRSS). The segment covering 1859-1881 (TVSSPKSEQLSDNQEVNLVSQET) has biased composition (polar residues). Acidic residues predominate over residues 1918–1927 (DSDEVFEDAP). Positions 1953–1963 (DGQRAETKSPE) are enriched in basic and acidic residues. Acidic residues-rich tracts occupy residues 1964–1975 (DEVVILLDEESQ) and 2036–2079 (SMDE…DGEE). Low complexity-rich tracts occupy residues 2214–2230 (PSEVEPTPVEEPTALPI) and 2269–2291 (SGTASKGPSTSSSTKTNKSTVSK). The segment covering 2297 to 2308 (NEPTNKSNSTPL) has biased composition (polar residues). A compositionally biased stretch (acidic residues) spans 2411-2425 (DYETSATEEEQEEPN). The UBA-like 2 domain occupies 2457 to 2513 (DPAILARKYVDQELVTNIAEAQIAATLVSMKFSEDVALWAARECSDLDQAIAMLQQE). Residues 2510–2748 (LQQECELCMN…LGLHAHHPRN (239 aa)) form a TRIAD supradomain region. Positions 2514, 2517, 2537, 2540, 2618, 2621, 2636, 2639, 2644, 2647, 2655, 2660, 2690, and 2693 each coordinate Zn(2+). Residues 2514–2564 (CELCMNSYPMNQMVSMLKCLHKCCKQCAKSYFTVQITDRSINDCSCPFCKL) form an RING-type 1 zinc finger. Residues 2514-2892 (CELCMNSYPM…IKKHIPLKSA (379 aa)) form a necessary for linear polyubiquitination and sufficent for inducing DptA in the intestine region. The segment at 2601–2660 (QRKLRDRSLLQDPNFKWCIQCSSGFFARPKQKRLICPDCGSVTCAQCRKPWERQHEGSSC) adopts an IBR-type zinc-finger fold. Residues 2690–2720 (CPKCKFRYSLARGGCMHFTCTQCKFEFCYGC) form an RING-type 2; atypical zinc finger. C2704 is an active-site residue. Zn(2+)-binding residues include C2709 and C2712.

The protein belongs to the RBR family.

The catalysed reaction is [E2 ubiquitin-conjugating enzyme]-S-ubiquitinyl-L-cysteine + [acceptor protein]-L-lysine = [E2 ubiquitin-conjugating enzyme]-L-cysteine + [acceptor protein]-N(6)-ubiquitinyl-L-lysine.. Its function is as follows. E3 ubiquitin-protein ligase which conjugates linear 'Met-1'- and 'Lys-63'-linked polyubiquitin chains to substrates and plays a crucial role in the NF-kappa-B intestinal inflammatory response to oral infection and in the heat stress response. Preferentially interacts with 'Lys-63'-linked, and to a lesser extent 'Lys-48'-linked, polyubiquitin chains. Upon oral infection with a Gram-negative bacterium E.carotovora subsp. carotovora 15, functions with the E2 ubiquitin-conjugating enzyme Ubc10 to mediate the conjugation of 'Lys-63'- and linear 'Met-1'-linked polyubiquitin chains to the substrate key which is essential for activation of the NF-kappa-B signaling cascade in the adult intestinal epithelium. It is not required for systemic immune response to septic infection with either E.carotovora subsp. carotovora 15 or Gram-positive M.luteus bacteria. Function in controlling linear ubiquitination is also essential for regulating the heat stress response in adults. This function may require the E2 ubiquitin-conjugating enzymes Ubc10 or eff. This is E3 ubiquitin-protein ligase lubel from Drosophila melanogaster (Fruit fly).